A 615-amino-acid chain; its full sequence is 1-deoxy-D-xylulose-5-phosphate synthase (615 aa).

Thiamine diphosphate is bound by residues His-77 and 118 to 120; that span reads GHS. Asp-149 is a Mg(2+) binding site. Thiamine diphosphate contacts are provided by residues 150 to 151, Asn-178, Tyr-286, and Glu-367; that span reads GA. Residue Asn-178 coordinates Mg(2+).

This sequence belongs to the transketolase family. DXPS subfamily. As to quaternary structure, homodimer. Mg(2+) is required as a cofactor. Requires thiamine diphosphate as cofactor.

It carries out the reaction D-glyceraldehyde 3-phosphate + pyruvate + H(+) = 1-deoxy-D-xylulose 5-phosphate + CO2. It functions in the pathway metabolic intermediate biosynthesis; 1-deoxy-D-xylulose 5-phosphate biosynthesis; 1-deoxy-D-xylulose 5-phosphate from D-glyceraldehyde 3-phosphate and pyruvate: step 1/1. Catalyzes the acyloin condensation reaction between C atoms 2 and 3 of pyruvate and glyceraldehyde 3-phosphate to yield 1-deoxy-D-xylulose-5-phosphate (DXP). The polypeptide is 1-deoxy-D-xylulose-5-phosphate synthase (Glaesserella parasuis serovar 5 (strain SH0165) (Haemophilus parasuis)).